A 154-amino-acid chain; its full sequence is Large ribosomal subunit protein uL30 (154 aa).

It belongs to the universal ribosomal protein uL30 family. As to quaternary structure, part of the 50S ribosomal subunit.

This is Large ribosomal subunit protein uL30 from Methanococcus vannielii.